We begin with the raw amino-acid sequence, 757 residues long: Serine/threonine-protein phosphatase 2A 56 kDa regulatory subunit delta isoform (757 aa).

Over residues 1 to 11 (MMRGFKQRLIK) the composition is skewed to basic residues. 2 disordered regions span residues 1-172 (MMRG…EDHA) and 188-250 (ISNA…NPDT). The span at 12–21 (KTTGSSSSSS) shows a compositional bias: low complexity. The span at 23–34 (KKKDKEKEKEKS) shows a compositional bias: basic and acidic residues. 3 stretches are compositionally biased toward low complexity: residues 35–66 (STTS…GSKS), 86–119 (SSTS…STKK), and 128–147 (QSKQ…SSSS). The segment covering 160 to 172 (TKDDKSTSGEDHA) has biased composition (basic and acidic residues). Residues 197–216 (SSDVENGNSNNNNMNINTSN) are compositionally biased toward low complexity. The span at 217–228 (TQDANHASSQSI) shows a compositional bias: polar residues. A phosphothreonine mark is found at Thr242 and Thr257. The segment at 734–757 (SFNTASENNTLNEENENDCDSEIQ) is disordered. Residues 746 to 757 (EENENDCDSEIQ) are compositionally biased toward acidic residues.

The protein belongs to the phosphatase 2A regulatory subunit B family. In terms of assembly, PP2A consists of a common heterodimeric core enzyme, composed of a 36 kDa catalytic subunit (subunit C) and a 65 kDa constant regulatory subunit (PR65 or subunit A), that associates with a variety of regulatory subunits. Proteins that associate with the core dimer include three families of regulatory subunits B (the R2/B/PR55/B55, R3/B''/PR72/PR130/PR59 and R5/B'/B56 families), the 48 kDa variable regulatory subunit, viral proteins, and cell signaling molecules.

The protein resides in the cytoplasm. Its subcellular location is the nucleus. Functionally, the B regulatory subunit might modulate substrate selectivity and catalytic activity, and might also direct the localization of the catalytic enzyme to a particular subcellular compartment. Its function is as follows. Multicopy suppressor of ROX3 and HSP60. This chain is Serine/threonine-protein phosphatase 2A 56 kDa regulatory subunit delta isoform (RTS1), found in Saccharomyces cerevisiae (strain ATCC 204508 / S288c) (Baker's yeast).